The chain runs to 224 residues: MIDALRLMAWLSPTYPVGAFAYSHGLEWAVECGDVRDAATLADWLSDVLERGAGRNDMILCACAHRAVAARDDADLVAINDLALALAPSRELHLETSQQGRSFLDATLQAWPCPALAEVAARLEGRLAYPIAVGAAAGAHGVAREATVAAYGLAFVQNLVSAALRVAPVGQSAGTAVLASLTPRVAALAETLHAADRDALGSATLRLDLGSFRHETQYSRIFRS.

Belongs to the UreF family. UreD, UreF and UreG form a complex that acts as a GTP-hydrolysis-dependent molecular chaperone, activating the urease apoprotein by helping to assemble the nickel containing metallocenter of UreC. The UreE protein probably delivers the nickel.

It is found in the cytoplasm. Functionally, required for maturation of urease via the functional incorporation of the urease nickel metallocenter. The chain is Urease accessory protein UreF from Methylorubrum populi (strain ATCC BAA-705 / NCIMB 13946 / BJ001) (Methylobacterium populi).